We begin with the raw amino-acid sequence, 352 residues long: Holliday junction branch migration complex subunit RuvB (352 aa).

Positions 4–191 (TDKLAAPARV…FGIVARLEFY (188 aa)) are large ATPase domain (RuvB-L). Residues L30, R31, G72, K75, T76, T77, 138–140 (EDY), R181, Y191, and R228 contribute to the ATP site. Mg(2+) is bound at residue T76. Positions 192-262 (TADELARIVT…MADAALAMLD (71 aa)) are small ATPAse domain (RuvB-S). The head domain (RuvB-H) stretch occupies residues 265–352 (SVGFDLMDRK…SGASELFGDA (88 aa)). Residues R301, R320, and R325 each coordinate DNA.

This sequence belongs to the RuvB family. Homohexamer. Forms an RuvA(8)-RuvB(12)-Holliday junction (HJ) complex. HJ DNA is sandwiched between 2 RuvA tetramers; dsDNA enters through RuvA and exits via RuvB. An RuvB hexamer assembles on each DNA strand where it exits the tetramer. Each RuvB hexamer is contacted by two RuvA subunits (via domain III) on 2 adjacent RuvB subunits; this complex drives branch migration. In the full resolvosome a probable DNA-RuvA(4)-RuvB(12)-RuvC(2) complex forms which resolves the HJ.

The protein localises to the cytoplasm. The catalysed reaction is ATP + H2O = ADP + phosphate + H(+). Functionally, the RuvA-RuvB-RuvC complex processes Holliday junction (HJ) DNA during genetic recombination and DNA repair, while the RuvA-RuvB complex plays an important role in the rescue of blocked DNA replication forks via replication fork reversal (RFR). RuvA specifically binds to HJ cruciform DNA, conferring on it an open structure. The RuvB hexamer acts as an ATP-dependent pump, pulling dsDNA into and through the RuvAB complex. RuvB forms 2 homohexamers on either side of HJ DNA bound by 1 or 2 RuvA tetramers; 4 subunits per hexamer contact DNA at a time. Coordinated motions by a converter formed by DNA-disengaged RuvB subunits stimulates ATP hydrolysis and nucleotide exchange. Immobilization of the converter enables RuvB to convert the ATP-contained energy into a lever motion, pulling 2 nucleotides of DNA out of the RuvA tetramer per ATP hydrolyzed, thus driving DNA branch migration. The RuvB motors rotate together with the DNA substrate, which together with the progressing nucleotide cycle form the mechanistic basis for DNA recombination by continuous HJ branch migration. Branch migration allows RuvC to scan DNA until it finds its consensus sequence, where it cleaves and resolves cruciform DNA. The chain is Holliday junction branch migration complex subunit RuvB from Cupriavidus necator (strain ATCC 17699 / DSM 428 / KCTC 22496 / NCIMB 10442 / H16 / Stanier 337) (Ralstonia eutropha).